The following is a 292-amino-acid chain: Oxidative stress-responsive serine-rich protein 1 (292 aa).

The interval Ser27–Ala175 is disordered. A compositionally biased stretch (basic residues) spans Ser65 to Lys83. A phosphothreonine mark is found at Thr143 and Thr233.

The sequence is that of Oxidative stress-responsive serine-rich protein 1 (OSER1) from Pongo abelii (Sumatran orangutan).